The chain runs to 1049 residues: Self-sufficient cytochrome P450 monooxygenase CYP505E4 (1049 aa).

Cys405 serves as a coordination point for heme. The interval 462 to 492 is disordered; the sequence is ATALSQHNMSAGATSSPGSSAHPAGNKNAQD. Residues 471–486 show a composition bias toward low complexity; it reads SAGATSSPGSSAHPAG. Residues 499–640 form the Flavodoxin-like domain; sequence ISFFYGSNSG…DLEVWEETNL (142 aa). Residues 505 to 509 and 584 to 616 each bind FMN; these read SNSGT and VFGC…TRLT. The FAD-binding FR-type domain occupies 678–906; the sequence is RDLIEGKVTA…RPAKEAFHLP (229 aa).

The protein in the N-terminal section; belongs to the cytochrome P450 family. FAD serves as cofactor. FMN is required as a cofactor. It depends on heme as a cofactor.

The catalysed reaction is 2 oxidized [cytochrome P450] + NADPH = 2 reduced [cytochrome P450] + NADP(+) + H(+). It catalyses the reaction an organic molecule + reduced [NADPH--hemoprotein reductase] + O2 = an alcohol + oxidized [NADPH--hemoprotein reductase] + H2O + H(+). It carries out the reaction dodecanoate + reduced [NADPH--hemoprotein reductase] + O2 = 5-hydroxydodecanoate + oxidized [NADPH--hemoprotein reductase] + H2O + H(+). The enzyme catalyses tetradecanoate + reduced [NADPH--hemoprotein reductase] + O2 = 7-hydroxytetradecanoate + oxidized [NADPH--hemoprotein reductase] + H2O + H(+). The catalysed reaction is dodecan-1-ol + reduced [NADPH--hemoprotein reductase] + O2 = 1,5-dodecanediol + oxidized [NADPH--hemoprotein reductase] + H2O + H(+). It catalyses the reaction dodecan-1-ol + reduced [NADPH--hemoprotein reductase] + O2 = 1,4-dodecanediol + oxidized [NADPH--hemoprotein reductase] + H2O + H(+). It carries out the reaction dodecan-1-ol + reduced [NADPH--hemoprotein reductase] + O2 = 1,6-dodecanediol + oxidized [NADPH--hemoprotein reductase] + H2O + H(+). Functionally, self-sufficient cytochrome P450 monooxygenase that catalyzes the regioselective in-chain hydroxylation of alkanes, fatty alcohols, and fatty acids at the omega-7 position. Performs hydroxylation of C10-C16 n-alkanes and C12 and C14 fatty alcohols; and thereby enables the one step biocatalytic synthesis of rare alcohols such as 5-dodecanol and 7-tetradecanol. Converts 1-dodecanol into 1,5-dodecanediol as major product with very little sub-terminally hydroxylated products with the 1,4-dodecanediol and 1,6-dodecanediol more abundant. Converts dodecanoic acid to 5-hydroxydodecanoic acid which can be further converted into delta-dodecalactone by lactonization of the 5-hydroxy acid at low pH. Also gives sub-terminal hydroxylation of dodecanoic acid with 9-hydroxydodecanoic acid being the second most abundant product. In Penicillium freii, this protein is Self-sufficient cytochrome P450 monooxygenase CYP505E4.